The following is a 294-amino-acid chain: Pantothenate synthetase 3 (294 aa).

31 to 38 (MGALHEGH) serves as a coordination point for ATP. Residue His-38 is the Proton donor of the active site. Gln-62 contributes to the (R)-pantoate binding site. Gln-62 is a beta-alanine binding site. 154–157 (GEKD) contacts ATP. Residue Gln-160 participates in (R)-pantoate binding. 191-194 (LSSR) contributes to the ATP binding site.

The protein belongs to the pantothenate synthetase family. Homodimer.

Its subcellular location is the cytoplasm. It carries out the reaction (R)-pantoate + beta-alanine + ATP = (R)-pantothenate + AMP + diphosphate + H(+). The protein operates within cofactor biosynthesis; (R)-pantothenate biosynthesis; (R)-pantothenate from (R)-pantoate and beta-alanine: step 1/1. Its function is as follows. Catalyzes the condensation of pantoate with beta-alanine in an ATP-dependent reaction via a pantoyl-adenylate intermediate. The chain is Pantothenate synthetase 3 from Frankia alni (strain DSM 45986 / CECT 9034 / ACN14a).